The sequence spans 202 residues: Protein GrpE (202 aa).

The segment covering 21–37 (EELKNEEVKEETHEHEH) has biased composition (basic and acidic residues). Positions 21 to 52 (EELKNEEVKEETHEHEHKHGGHTCCGKHGHKH) are disordered. Residues 38 to 51 (KHGGHTCCGKHGHK) show a composition bias toward basic residues.

It belongs to the GrpE family. In terms of assembly, homodimer.

It localises to the cytoplasm. In terms of biological role, participates actively in the response to hyperosmotic and heat shock by preventing the aggregation of stress-denatured proteins, in association with DnaK and GrpE. It is the nucleotide exchange factor for DnaK and may function as a thermosensor. Unfolded proteins bind initially to DnaJ; upon interaction with the DnaJ-bound protein, DnaK hydrolyzes its bound ATP, resulting in the formation of a stable complex. GrpE releases ADP from DnaK; ATP binding to DnaK triggers the release of the substrate protein, thus completing the reaction cycle. Several rounds of ATP-dependent interactions between DnaJ, DnaK and GrpE are required for fully efficient folding. This is Protein GrpE from Fusobacterium nucleatum subsp. polymorphum (Fusobacterium polymorphum).